The primary structure comprises 365 residues: tRNA N6-adenosine threonylcarbamoyltransferase (365 aa).

The Fe cation site is built by His119 and His123. Substrate-binding positions include 141–145 (LVSGG), Asp174, Gly187, and Asn289. Residue Asp317 participates in Fe cation binding. The segment at 341-365 (SARPRWPLDKTSPALIGSGKKGAKA) is disordered.

Belongs to the KAE1 / TsaD family. It depends on Fe(2+) as a cofactor.

The protein resides in the cytoplasm. It carries out the reaction L-threonylcarbamoyladenylate + adenosine(37) in tRNA = N(6)-L-threonylcarbamoyladenosine(37) in tRNA + AMP + H(+). Functionally, required for the formation of a threonylcarbamoyl group on adenosine at position 37 (t(6)A37) in tRNAs that read codons beginning with adenine. Is involved in the transfer of the threonylcarbamoyl moiety of threonylcarbamoyl-AMP (TC-AMP) to the N6 group of A37, together with TsaE and TsaB. TsaD likely plays a direct catalytic role in this reaction. The polypeptide is tRNA N6-adenosine threonylcarbamoyltransferase (Ruegeria sp. (strain TM1040) (Silicibacter sp.)).